Consider the following 757-residue polypeptide: Elongation factor G, mitochondrial (757 aa).

Residues 1–39 constitute a mitochondrion transit peptide; that stretch reads MLLVPRVPVVMQGKCGLLKISRPLQGSLSRGFHFSRAHR. Residues 65–346 form the tr-type G domain; the sequence is QKLRNIGISA…AIVDYLPNPS (282 aa). Residues 74-81, 145-149, and 199-202 each bind GTP; these read AHIDSGKT, DTPGH, and NKMD.

Belongs to the TRAFAC class translation factor GTPase superfamily. Classic translation factor GTPase family. EF-G/EF-2 subfamily.

Its subcellular location is the mitochondrion. It functions in the pathway protein biosynthesis; polypeptide chain elongation. Functionally, mitochondrial GTPase that catalyzes the GTP-dependent ribosomal translocation step during translation elongation. During this step, the ribosome changes from the pre-translocational (PRE) to the post-translocational (POST) state as the newly formed A-site-bound peptidyl-tRNA and P-site-bound deacylated tRNA move to the P and E sites, respectively. Catalyzes the coordinated movement of the two tRNA molecules, the mRNA and conformational changes in the ribosome. The protein is Elongation factor G, mitochondrial of Candida glabrata (strain ATCC 2001 / BCRC 20586 / JCM 3761 / NBRC 0622 / NRRL Y-65 / CBS 138) (Yeast).